The sequence spans 83 residues: Neurotoxin LmNaTx10 (83 aa).

An N-terminal signal peptide occupies residues 1–19 (MNFLIFIAVASSLALGALC). In terms of domain architecture, LCN-type CS-alpha/beta spans 21–80 (KEGYPYDGNNCRYICFRNQYCDDLCKKLKGESGYCYGWNQSCYCYGLPDTEKTKPDKRCH). Intrachain disulfides connect cysteine 31-cysteine 79, cysteine 35-cysteine 55, cysteine 41-cysteine 62, and cysteine 45-cysteine 64.

This sequence belongs to the long (4 C-C) scorpion toxin superfamily. Sodium channel inhibitor family. Alpha subfamily. Expressed by the venom gland.

The protein resides in the secreted. Binds voltage-independently at site-3 of voltage-gated sodium channels (Nav) and inhibits the inactivation of the activated channels, thereby blocking neuronal transmission. The protein is Neurotoxin LmNaTx10 of Lychas mucronatus (Chinese swimming scorpion).